The chain runs to 443 residues: Sensor histidine protein kinase HK06 (443 aa).

2 helical membrane-spanning segments follow: residues 16-36 and 140-160; these read FAIL…TFPF and ILLL…FVFS. The region spanning 165-217 is the HAMP domain; sequence KRLLNPLFYISEVTSKMQDLDDNIRFDESRKDEVGEVGKQINGMYEHLLKVIH. Positions 239 to 443 constitute a Histidine kinase domain; the sequence is GASHELKTPL…EHGMEFKISL (205 aa). At His-242 the chain carries Phosphohistidine; by autocatalysis.

It is found in the cell membrane. The enzyme catalyses ATP + protein L-histidine = ADP + protein N-phospho-L-histidine.. Functionally, member of the two-component regulatory system HK06/RR06 involved in regulation of target genes, including choline-binding protein CbpA. Has been shown in one study to not be required for regulation of expression of choline-binding protein CbpA. The chain is Sensor histidine protein kinase HK06 from Streptococcus pneumoniae serotype 2 (strain D39 / NCTC 7466).